We begin with the raw amino-acid sequence, 113 residues long: Ribonuclease P protein component (113 aa).

This sequence belongs to the RnpA family. As to quaternary structure, consists of a catalytic RNA component (M1 or rnpB) and a protein subunit.

The catalysed reaction is Endonucleolytic cleavage of RNA, removing 5'-extranucleotides from tRNA precursor.. In terms of biological role, RNaseP catalyzes the removal of the 5'-leader sequence from pre-tRNA to produce the mature 5'-terminus. It can also cleave other RNA substrates such as 4.5S RNA. The protein component plays an auxiliary but essential role in vivo by binding to the 5'-leader sequence and broadening the substrate specificity of the ribozyme. This Vesicomyosocius okutanii subsp. Calyptogena okutanii (strain HA) protein is Ribonuclease P protein component.